Here is a 503-residue protein sequence, read N- to C-terminus: Putative FBD-associated F-box protein At5g56410 (503 aa).

In terms of domain architecture, F-box spans 2 to 50 (DKITGFSDDELLVKILSFLPTKAAVTTSILSKQWKFLWMRLPKLEYHDD). Residues 361 to 412 (FWEQMITSVPQCLLSSLQTFKWLGNGDSIEGKDLATFILRNSCQLKTATISI) form the FBD domain.

This is Putative FBD-associated F-box protein At5g56410 from Arabidopsis thaliana (Mouse-ear cress).